We begin with the raw amino-acid sequence, 153 residues long: Pheromone-binding protein Gp-9 (153 aa).

A signal peptide spans 1–19 (MKTFVLHIFIFALVAFASA). 3 disulfides stabilise this stretch: Cys37/Cys77, Cys73/Cys129, and Cys118/Cys138.

It belongs to the PBP/GOBP family. In terms of assembly, homodimer.

It localises to the secreted. In terms of biological role, colony queen number, a major feature of social organization, is associated with worker genotype for Gp-9. Colonies are headed by either a single reproductive queen (monogyne form) or multiple queens (polygyne form). Differences in worker Gp-9 genotypes between social forms may cause differences in workers' abilities to recognize queens and regulate their numbers. The protein is Pheromone-binding protein Gp-9 of Solenopsis interrupta (Fire ant).